A 747-amino-acid chain; its full sequence is Histone-lysine N-methyltransferase EZH1 (747 aa).

The tract at residues 186-229 (YSDEDEEGHNDTSDGKQDDSKEDLPVTRKRKRHAIEGSKKSSKK) is disordered. Residues 194–211 (HNDTSDGKQDDSKEDLPV) show a composition bias toward basic and acidic residues. Lysine 327 participates in a covalent cross-link: Glycyl lysine isopeptide (Lys-Gly) (interchain with G-Cter in SUMO2). Positions 375–421 (TSASAVAETKEGDSDRDTGNDWASSSSEANSRCQTPTKQKASPAPPQ) are disordered. The span at 382-393 (ETKEGDSDRDTG) shows a compositional bias: basic and acidic residues. The span at 395 to 414 (DWASSSSEANSRCQTPTKQK) shows a compositional bias: polar residues. In terms of domain architecture, CXC spans 504–606 (CRKIQLKKDN…CKVVSCKNCS (103 aa)). Positions 613 to 728 (KHLLLAPSDV…AGEELFFDYR (116 aa)) constitute an SET domain.

Belongs to the class V-like SAM-binding methyltransferase superfamily. Histone-lysine methyltransferase family. EZ subfamily. In terms of assembly, component of the PRC2/EED-EZH1 complex, which includes EED, EZH1, SUZ12, RBBP4 and AEBP2. The PRC2/EED-EZH1 is less abundant than the PRC2/EED-EZH2 complex, has weak methyltransferase activity and compacts chromatin in the absence of the methyltransferase cofactor S-adenosyl-L-methionine (SAM). Interacts with EZHIP; the interaction blocks EZH1 methyltransferase activity.

The protein resides in the nucleus. The enzyme catalyses L-lysyl(27)-[histone H3] + 3 S-adenosyl-L-methionine = N(6),N(6),N(6)-trimethyl-L-lysyl(27)-[histone H3] + 3 S-adenosyl-L-homocysteine + 3 H(+). Its function is as follows. Polycomb group (PcG) protein. Catalytic subunit of the PRC2/EED-EZH1 complex, which methylates 'Lys-27' of histone H3, leading to transcriptional repression of the affected target gene. Able to mono-, di- and trimethylate 'Lys-27' of histone H3 to form H3K27me1, H3K27me2 and H3K27me3, respectively. Required for embryonic stem cell derivation and self-renewal, suggesting that it is involved in safeguarding embryonic stem cell identity. Compared to EZH2-containing complexes, it is less abundant in embryonic stem cells, has weak methyltransferase activity and plays a less critical role in forming H3K27me3, which is required for embryonic stem cell identity and proper differentiation. In Bos taurus (Bovine), this protein is Histone-lysine N-methyltransferase EZH1 (EZH1).